We begin with the raw amino-acid sequence, 384 residues long: Actin-related protein 2/3 complex subunit 1 (384 aa).

WD repeat units follow at residues 61–99, 105–146, 151–190, 212–251, and 349–383; these read DHDK…TYKP, RINR…WVSK, PIKS…LDSK, YQGS…QSVN, and AHEN…VIYT.

It belongs to the WD repeat ARPC1 family. Component of the Arp2/3 complex composed of ARP2, ARP3, ARC40/p41-ARC, ARC35/p34-ARC, ARC18/p21-ARC, ARC19/p20-ARC and ARC16/p16-ARC.

Its subcellular location is the cytoplasm. The protein resides in the cytoskeleton. It localises to the actin patch. Functionally, functions as a component of the Arp2/3 complex which is involved in regulation of actin polymerization and together with an activating nucleation-promoting factor (NPF) mediates the formation of branched actin networks. This is Actin-related protein 2/3 complex subunit 1 (ARC40) from Saccharomyces cerevisiae (strain ATCC 204508 / S288c) (Baker's yeast).